Reading from the N-terminus, the 178-residue chain is Large ribosomal subunit protein bL25 (178 aa).

The protein belongs to the bacterial ribosomal protein bL25 family. CTC subfamily. Part of the 50S ribosomal subunit; part of the 5S rRNA/L5/L18/L25 subcomplex. Contacts the 5S rRNA. Binds to the 5S rRNA independently of L5 and L18.

This is one of the proteins that binds to the 5S RNA in the ribosome where it forms part of the central protuberance. In Helicobacter pylori (strain G27), this protein is Large ribosomal subunit protein bL25.